The primary structure comprises 44 residues: Brevinin-1PLa (44 aa).

A propeptide spanning residues 1-18 (NAEEERRDEPDETDVEVE) is cleaved from the precursor. A disulfide bond links Cys38 and Cys44.

As to expression, expressed by the skin glands.

The protein localises to the secreted. Its function is as follows. Antimicrobial peptide. The protein is Brevinin-1PLa of Lithobates palustris (Pickerel frog).